Here is a 920-residue protein sequence, read N- to C-terminus: Ubiquitin ligase-binding protein BUL2 (920 aa).

Residues 1-10 show a composition bias toward polar residues; the sequence is MTFTFSTSSR. Residues 1–89 form a disordered region; the sequence is MTFTFSTSSR…EENSLEMDCT (89 aa). Phosphothreonine is present on threonine 22. A compositionally biased stretch (polar residues) spans 35–57; sequence QQLSSNSTDNSLHPNSGQTPRAS. A compositionally biased stretch (basic and acidic residues) spans 73 to 82; that stretch reads DRLRQEREEN. Positions 129-133 match the PY-motif motif; that stretch reads FPPSY. At serine 557 the chain carries Phosphoserine.

This sequence belongs to the BUL1 family. In terms of assembly, component of the RSP5-BUL1/2 ubiquitin ligase complex composed of at least RSP5 and BUL1 or BUL2.

The protein localises to the cytoplasm. Its pathway is protein modification; protein ubiquitination. Functionally, component of a RSP5 ubiquitin ligase complex which specifies polyubiquitination and intracellular trafficking of the general amino acid permease GAP1 as well as other permeases such as PMA1. The RSP5-BUL1/2 complex is also necessary for the heat-shock element (HSE)-mediated gene expression, nitrogen starvation GLN3-dependent transcription and pressure-induced differential regulation of the 2 tryptophan permeases TAT1 and TAT2. This chain is Ubiquitin ligase-binding protein BUL2 (BUL2), found in Saccharomyces cerevisiae (strain ATCC 204508 / S288c) (Baker's yeast).